Consider the following 166-residue polypeptide: MEGAMTEPGKEMTHLDARGRLRMVDVSGKERTAREARAEATVEVSPETLTRISEGTIAKGNVYEAARIAGIMAAKRTWELIPLCHPLQVTGVEIEFSADPARNEIRILSRVKTLDRTGVEMEALVAAAHAGLTIYDMCKAVDRGIVIRDIRLLYKSGGKSGTFERA.

Residues 83-85 (LCH) and 121-122 (ME) contribute to the substrate site. Asp-136 is an active-site residue.

The protein belongs to the MoaC family. Homohexamer; trimer of dimers.

The catalysed reaction is (8S)-3',8-cyclo-7,8-dihydroguanosine 5'-triphosphate = cyclic pyranopterin phosphate + diphosphate. Its pathway is cofactor biosynthesis; molybdopterin biosynthesis. Functionally, catalyzes the conversion of (8S)-3',8-cyclo-7,8-dihydroguanosine 5'-triphosphate to cyclic pyranopterin monophosphate (cPMP). The protein is Cyclic pyranopterin monophosphate synthase of Syntrophobacter fumaroxidans (strain DSM 10017 / MPOB).